The following is a 110-amino-acid chain: DNA-binding protein Tneu_1679 (110 aa).

The protein belongs to the PDCD5 family.

In Pyrobaculum neutrophilum (strain DSM 2338 / JCM 9278 / NBRC 100436 / V24Sta) (Thermoproteus neutrophilus), this protein is DNA-binding protein Tneu_1679.